Consider the following 291-residue polypeptide: MRIPFTKMQGAGNDFVVLDETQGRFGLSTAHYRLLADRHFGVGADQILTVRPSPAPGIDFEYLIHNADGAEVEQCGNGARCFARFVRDQGLTAKDAIRVQTRGGVIEPQLNPDGRVTVNMGAPVFELAEIPFDATGLQPQTSGLWKKWPLALVDSGHATTVYVAVVSMGNPHAVQVVDDVDTAPVRLQGPLIEHHASFPKRVNAGFMQIVDRSHIRLRVYERGTGETLACGSGACAAVVAGIRLGLLDDTVHVQTHGGTLTISWAGAAAPVLMTGPATPVFHGEINLPDNL.

Positions 13, 46, and 66 each coordinate substrate. Catalysis depends on C75, which acts as the Proton donor. Substrate is bound by residues 76–77 (GN), N170, N203, and 221–222 (ER). Catalysis depends on C230, which acts as the Proton acceptor. 231–232 (GS) lines the substrate pocket.

The protein belongs to the diaminopimelate epimerase family. In terms of assembly, homodimer.

It is found in the cytoplasm. It carries out the reaction (2S,6S)-2,6-diaminopimelate = meso-2,6-diaminopimelate. It functions in the pathway amino-acid biosynthesis; L-lysine biosynthesis via DAP pathway; DL-2,6-diaminopimelate from LL-2,6-diaminopimelate: step 1/1. Functionally, catalyzes the stereoinversion of LL-2,6-diaminopimelate (L,L-DAP) to meso-diaminopimelate (meso-DAP), a precursor of L-lysine and an essential component of the bacterial peptidoglycan. This is Diaminopimelate epimerase from Albidiferax ferrireducens (strain ATCC BAA-621 / DSM 15236 / T118) (Rhodoferax ferrireducens).